Here is a 405-residue protein sequence, read N- to C-terminus: Probable tRNA sulfurtransferase (405 aa).

In terms of domain architecture, THUMP spans 75–183 (PRAAGAAADV…QNLAYVYLET (109 aa)). Residues 201–202 (LM), Lys-285, Gly-307, and Gln-316 each bind ATP.

The protein belongs to the ThiI family.

It is found in the cytoplasm. It carries out the reaction [ThiI sulfur-carrier protein]-S-sulfanyl-L-cysteine + a uridine in tRNA + 2 reduced [2Fe-2S]-[ferredoxin] + ATP + H(+) = [ThiI sulfur-carrier protein]-L-cysteine + a 4-thiouridine in tRNA + 2 oxidized [2Fe-2S]-[ferredoxin] + AMP + diphosphate. The catalysed reaction is [ThiS sulfur-carrier protein]-C-terminal Gly-Gly-AMP + S-sulfanyl-L-cysteinyl-[cysteine desulfurase] + AH2 = [ThiS sulfur-carrier protein]-C-terminal-Gly-aminoethanethioate + L-cysteinyl-[cysteine desulfurase] + A + AMP + 2 H(+). It functions in the pathway cofactor biosynthesis; thiamine diphosphate biosynthesis. Its function is as follows. Catalyzes the ATP-dependent transfer of a sulfur to tRNA to produce 4-thiouridine in position 8 of tRNAs, which functions as a near-UV photosensor. Also catalyzes the transfer of sulfur to the sulfur carrier protein ThiS, forming ThiS-thiocarboxylate. This is a step in the synthesis of thiazole, in the thiamine biosynthesis pathway. The sulfur is donated as persulfide by IscS. This is Probable tRNA sulfurtransferase from Methanosarcina mazei (strain ATCC BAA-159 / DSM 3647 / Goe1 / Go1 / JCM 11833 / OCM 88) (Methanosarcina frisia).